A 327-amino-acid chain; its full sequence is Sideroflexin-2 (327 aa).

Helical transmembrane passes span 99 to 119 (GMLITGGMLAFYRTVPAVVLW), 143 to 163 (VTQLGVAYVSATTSALVAAIG), 175 to 195 (LFQRFVPFAAVAAANFVNIPL), 228 to 248 (EVVVSRIAMAAPGMLVLPLIM), and 267 to 287 (FQTLLVGCFLCFMVPTACALF).

The protein belongs to the sideroflexin family.

Its subcellular location is the mitochondrion membrane. It catalyses the reaction L-serine(in) = L-serine(out). In terms of biological role, mitochondrial amino-acid transporter that mediates transport of serine into mitochondria. This is Sideroflexin-2 from Drosophila melanogaster (Fruit fly).